The chain runs to 211 residues: Glycerol-3-phosphate acyltransferase (211 aa).

A run of 4 helical transmembrane segments spans residues 5–25, 80–100, 112–132, and 138–158; these read ALGM…ILFC, PLYL…PVFF, FGAI…TWLL, and GYSS…VWWF.

This sequence belongs to the PlsY family. In terms of assembly, probably interacts with PlsX.

Its subcellular location is the cell inner membrane. The enzyme catalyses an acyl phosphate + sn-glycerol 3-phosphate = a 1-acyl-sn-glycero-3-phosphate + phosphate. The protein operates within lipid metabolism; phospholipid metabolism. Catalyzes the transfer of an acyl group from acyl-phosphate (acyl-PO(4)) to glycerol-3-phosphate (G3P) to form lysophosphatidic acid (LPA). This enzyme utilizes acyl-phosphate as fatty acyl donor, but not acyl-CoA or acyl-ACP. This Pectobacterium carotovorum subsp. carotovorum (strain PC1) protein is Glycerol-3-phosphate acyltransferase.